A 314-amino-acid chain; its full sequence is Zinc transporter ZIP3 (314 aa).

At 1–3 the chain is on the extracellular side; the sequence is MVK. The chain crosses the membrane as a helical span at residues 4 to 24; that stretch reads LLVAKILCMVGVFFFMLLGSL. At 25–42 the chain is on the cytoplasmic side; sequence LPVKIIETDFEKAHRSKK. Residues 43–63 traverse the membrane as a helical segment; it reads ILSLCNTFGGGVFLATCFNAL. Topologically, residues 64 to 85 are extracellular; sequence LPAVREKLQKVLSLGHISTDYP. Residues 86 to 106 form a helical membrane-spanning segment; it reads LAETILLLGFFMTVFLEQLIL. The Cytoplasmic portion of the chain corresponds to 107 to 169; that stretch reads TFRKEKPSFI…QGLSRASPVR (63 aa). S125 and S129 each carry phosphoserine. The chain crosses the membrane as a helical span at residues 170-190; the sequence is LLSLAFALSAHSVFEGLALGL. Residues 191 to 196 lie on the Extracellular side of the membrane; the sequence is QEEGEK. A helical membrane pass occupies residues 197-217; it reads VVSLFVGVAVHETLVAVALGI. Topologically, residues 218-229 are cytoplasmic; it reads SMARSAMPLRDA. A helical membrane pass occupies residues 230–250; sequence AKLAVTVSAMIPLGIGLGLGI. Residues 251 to 262 lie on the Extracellular side of the membrane; the sequence is ESAQGVPGSVAS. A helical transmembrane segment spans residues 263-283; that stretch reads VLLQGLAGGTFLFITFLEILA. Over 284–292 the chain is Cytoplasmic; that stretch reads KELEEKSDR. The chain crosses the membrane as a helical span at residues 293–313; sequence LLKVLFLVLGYTVLAGMVFLK. W314 is a topological domain (extracellular).

It belongs to the ZIP transporter (TC 2.A.5) family.

Its subcellular location is the cell membrane. It localises to the apical cell membrane. The catalysed reaction is Zn(2+)(in) = Zn(2+)(out). Transporter for the divalent cation Zn(2+). Mediates the influx of Zn(2+) into cells from extracellular space. Controls Zn(2+) accumulation into dentate gyrus granule cells in the hippocampus. Mediates Zn(2+) reuptake from the secreted milk within the alveolar lumen. The polypeptide is Zinc transporter ZIP3 (Homo sapiens (Human)).